Consider the following 214-residue polypeptide: uncharacterized protein (214 aa).

This is an uncharacterized protein from Sinorhizobium fredii (strain NBRC 101917 / NGR234).